Reading from the N-terminus, the 161-residue chain is Ribosome maturation factor RimP (161 aa).

Belongs to the RimP family.

It is found in the cytoplasm. Required for maturation of 30S ribosomal subunits. The sequence is that of Ribosome maturation factor RimP from Rickettsia conorii (strain ATCC VR-613 / Malish 7).